Reading from the N-terminus, the 359-residue chain is Transcription elongation factor A N-terminal and central domain-containing protein (359 aa).

Positions 1 to 82 (MSDKNQIIAR…AKWRGFYKST (82 aa)) constitute a TFIIS N-terminal domain. Positions 84 to 118 (CKPRQSPKVLHTNANKEESAAVSQDVSQDETSGSS) are disordered. The segment covering 104–118 (AVSQDVSQDETSGSS) has biased composition (polar residues). Positions 182-298 (VRSKCVELLY…EHCLPQSVDG (117 aa)) constitute a TFIIS central domain.

This chain is Transcription elongation factor A N-terminal and central domain-containing protein (Tceanc), found in Mus musculus (Mouse).